The sequence spans 1547 residues: Transposon Ty3-G Gag-Pol polyprotein (1547 aa).

Residue serine 2 is modified to N-acetylserine. The CCHC-type zinc finger occupies 265 to 282; sequence RLCFYCKKEGHRLNECRA. Aspartate 336 serves as the catalytic For protease activity; shared with dimeric partner. The Reverse transcriptase domain maps to 620–797; it reads LDNKFIVPSK…EETEFLGYSI (178 aa). Aspartate 686, aspartate 748, aspartate 749, aspartate 893, glutamate 936, and aspartate 961 together coordinate Mg(2+). Positions 893–1011 constitute an RNase H Ty3/gyspy-type domain; the sequence is DASKDGIGAV…VADAISRAVY (119 aa). Residues 1106–1145 form an integrase-type zinc finger-like region; that stretch reads HTLFGGHFGVTVTLAKISPIYYWPKLQHSIIQYIRTCVQC. In terms of domain architecture, Integrase catalytic spans 1159–1324; that stretch reads LQPLPIAEGR…SPFEIDLGYL (166 aa). Mg(2+) is bound by residues aspartate 1175 and aspartate 1236.

As to quaternary structure, the protease is a homodimer, whose active site consists of two apposed aspartic acid residues. Initially, virus-like particles (VLPs) are composed of the structural unprocessed proteins Gag and Gag-Pol, and also contain the host initiator methionine tRNA (tRNA(i)-Met) which serves as a primer for minus-strand DNA synthesis, and a dimer of genomic Ty RNA. Processing of the polyproteins occurs within the particle and proceeds by an ordered pathway, called maturation. First, the protease (PR) is released by autocatalytic cleavage of the Gag-Pol polyprotein, and this cleavage is a prerequisite for subsequent processing at the remaining sites to release the mature structural and catalytic proteins. Maturation takes place prior to the RT reaction and is required to produce transposition-competent VLPs.

The protein resides in the cytoplasm. Its subcellular location is the nucleus. The enzyme catalyses DNA(n) + a 2'-deoxyribonucleoside 5'-triphosphate = DNA(n+1) + diphosphate. It catalyses the reaction Endonucleolytic cleavage to 5'-phosphomonoester.. Functionally, capsid protein (CA) is the structural component of the virus-like particle (VLP), forming the shell that encapsulates the genomic RNA-nucleocapsid complex. In terms of biological role, nucleocapsid protein p11 (NC) forms the nucleocore that coats the retro-elements dimeric RNA. Binds these RNAs through its zinc fingers. Promotes primer tRNA(i)-Met annealing to the multipartite primer-binding site (PBS), dimerization of Ty3 RNA and initiation of reverse transcription. The aspartyl protease (PR) mediates the proteolytic cleavages of the Gag and Gag-Pol polyproteins after assembly of the VLP. Its function is as follows. Reverse transcriptase/ribonuclease H (RT) is a multifunctional enzyme that catalyzes the conversion of the retro-elements RNA genome into dsDNA within the VLP. The enzyme displays a DNA polymerase activity that can copy either DNA or RNA templates, and a ribonuclease H (RNase H) activity that cleaves the RNA strand of RNA-DNA heteroduplexes during plus-strand synthesis and hydrolyzes RNA primers. The conversion leads to a linear dsDNA copy of the retrotransposon that includes long terminal repeats (LTRs) at both ends. Functionally, integrase (IN) targets the VLP to the nucleus, where a subparticle preintegration complex (PIC) containing at least integrase and the newly synthesized dsDNA copy of the retrotransposon must transit the nuclear membrane. Once in the nucleus, integrase performs the integration of the dsDNA into the host genome. In Saccharomyces cerevisiae (strain ATCC 204508 / S288c) (Baker's yeast), this protein is Transposon Ty3-G Gag-Pol polyprotein (TY3B-G).